Reading from the N-terminus, the 250-residue chain is MPIRNIAVGSHQEVYHPGALKAALAEFISTLIFVFAGQGSGMAFSKLTGGGATTPAGLIAAAVAHAFALFVAVSVGANISGGHVNPAVTFGAFVGGNITLFRGLLYWIAQLLGSTVACFLLRFSTGGLATGTFGLTGVSVWEALVLEIVMTFGLVYTVYATAVDPKKGSLGTIAPIAIGFIVGANILVGGAFDGASMNPAVSFGPALVSWSWESQWVYWVGPLIGGGLAGVIYEVLFISHTHEQLPTTDY.

2 helical membrane passes run 25–44 and 58–77; these read AEFISTLIFVFAGQGSGMAF and LIAAAVAHAFALFVAVSVGA. An NPA 1 motif is present at residues 85-87; that stretch reads NPA. 3 helical membrane-spanning segments follow: residues 103–121, 144–163, and 170–192; these read GLLYWIAQLLGSTVACFLL, LVLEIVMTFGLVYTVYATAV, and LGTIAPIAIGFIVGANILVGGAF. Positions 198 to 200 match the NPA 2 motif; it reads NPA. Residues 216–233 traverse the membrane as a helical segment; it reads WVYWVGPLIGGGLAGVIY.

The protein belongs to the MIP/aquaporin (TC 1.A.8) family. TIP (TC 1.A.8.10) subfamily. As to expression, expressed in roots and leaves.

The protein resides in the vacuole membrane. Its function is as follows. Aquaporins facilitate the transport of water and small neutral solutes across cell membranes. May be involved in transport from the vacuolar compartment to the cytoplasm. The polypeptide is Probable aquaporin TIP1-1 (TIP1-1) (Oryza sativa subsp. japonica (Rice)).